The primary structure comprises 189 residues: Interferon alpha-1 (189 aa).

A signal peptide spans 1–23 (MARLCAFLMVLAVLSYWPTCSLG). Intrachain disulfides connect cysteine 24–cysteine 122 and cysteine 52–cysteine 162. N-linked (GlcNAc...) asparagine glycosylation is present at asparagine 101.

Belongs to the alpha/beta interferon family. Interacts with CR2. In terms of processing, glycosylated.

The protein localises to the secreted. Functionally, produced by macrophages, IFN-alpha have antiviral activities. Interferon stimulates the production of two enzymes: a protein kinase and an oligoadenylate synthetase. In Mus musculus (Mouse), this protein is Interferon alpha-1 (Ifna1).